Here is a 491-residue protein sequence, read N- to C-terminus: Cytosol aminopeptidase (491 aa).

Mn(2+)-binding residues include K263 and D268. K275 is an active-site residue. Positions 286, 345, and 347 each coordinate Mn(2+). R349 is a catalytic residue.

The protein belongs to the peptidase M17 family. Requires Mn(2+) as cofactor.

It localises to the cytoplasm. The enzyme catalyses Release of an N-terminal amino acid, Xaa-|-Yaa-, in which Xaa is preferably Leu, but may be other amino acids including Pro although not Arg or Lys, and Yaa may be Pro. Amino acid amides and methyl esters are also readily hydrolyzed, but rates on arylamides are exceedingly low.. It carries out the reaction Release of an N-terminal amino acid, preferentially leucine, but not glutamic or aspartic acids.. In terms of biological role, presumably involved in the processing and regular turnover of intracellular proteins. Catalyzes the removal of unsubstituted N-terminal amino acids from various peptides. This chain is Cytosol aminopeptidase (pepA), found in Haemophilus influenzae (strain ATCC 51907 / DSM 11121 / KW20 / Rd).